Reading from the N-terminus, the 750-residue chain is MIIRSPEPEVKILVDRDPIKTSFEEWAKPGHFSRTIAKGPDTTTWIWNLHADAHDFDSHTSDLEEISRKVFSAHFGQLSIIFLWLSGMYFHGARFSNYEAWLSDPTHIGPSAQVVWPIVGQEILNGDVGGGFRGIQITSGFFQIWRASGITSELQLYCTAIGALVFAALMLFAGWFHYHKAAPKLAWFQDVESMLNHHLAGLLGLGSLSWAGHQVHVSLPINQFLNAGVDPKEIPLPHEFILNRDLLAQLYPSFAEGATPFFTLNWSKYSEFLTFRGGLDPVTGGLWLTDIAHHHLAIAILFLIAGHMYRTNWGIGHGIKDILEAHKGPFTGQGHKGLYEILTTSWHAQLSLNLAMLGSLTIIVAHHMYSMPPYPYLATDYATQLSLFTHHMWIGGFLIVGAAAHAAIFMVRDYDPTNRYNDLLDRVLRHRDAIISHLNWVCIFLGFHSFGLYIHNDTMSALGRPQDMFSDTAIQLQPVFAQWIQNTHALAPGVTAPGETASTSLTWGGGELVAVGGKVALLPIPLGTADFLVHHIHAFTIHVTVLILLKGVLFARSSRLIPDKANLGFRFPCDGPGRGGTCQVSAWDHVFLGLFWMYNAISVVIFHFSWKMQSDVWGSISDQGVVTHITGGNFAQSSITINGWLRDFLWAQASQVIQSYGSSLSAYGLFFLGAHFVWAFSLMFLFSGRGYWQELIESIVWAHNKLKVAPATQPRALSIIQGRAVGVTHYLLGGIATTWAFFLARIIAVG.

8 helical membrane-spanning segments follow: residues Val-70–Ala-93, Leu-156–His-179, Leu-195–Leu-219, Ile-291–Tyr-309, Trp-346–Tyr-369, Leu-385–Val-411, Ala-433–His-455, and Phe-531–Leu-549. [4Fe-4S] cluster contacts are provided by Cys-573 and Cys-582. 2 helical membrane-spanning segments follow: residues His-589–Trp-610 and Leu-664–Phe-686. His-675 is a chlorophyll a' binding site. Chlorophyll a contacts are provided by Met-683 and Tyr-691. Residue Trp-692 participates in phylloquinone binding. Residues Ala-724–Ala-744 traverse the membrane as a helical segment.

The protein belongs to the PsaA/PsaB family. In terms of assembly, the PsaA/B heterodimer binds the P700 chlorophyll special pair and subsequent electron acceptors. PSI consists of a core antenna complex that captures photons, and an electron transfer chain that converts photonic excitation into a charge separation. The eukaryotic PSI reaction center is composed of at least 11 subunits. P700 is a chlorophyll a/chlorophyll a' dimer, A0 is one or more chlorophyll a, A1 is one or both phylloquinones and FX is a shared 4Fe-4S iron-sulfur center. serves as cofactor.

It is found in the plastid. The protein resides in the chloroplast thylakoid membrane. The enzyme catalyses reduced [plastocyanin] + hnu + oxidized [2Fe-2S]-[ferredoxin] = oxidized [plastocyanin] + reduced [2Fe-2S]-[ferredoxin]. Functionally, psaA and PsaB bind P700, the primary electron donor of photosystem I (PSI), as well as the electron acceptors A0, A1 and FX. PSI is a plastocyanin-ferredoxin oxidoreductase, converting photonic excitation into a charge separation, which transfers an electron from the donor P700 chlorophyll pair to the spectroscopically characterized acceptors A0, A1, FX, FA and FB in turn. Oxidized P700 is reduced on the lumenal side of the thylakoid membrane by plastocyanin. In Arabidopsis thaliana (Mouse-ear cress), this protein is Photosystem I P700 chlorophyll a apoprotein A1.